Here is a 1091-residue protein sequence, read N- to C-terminus: MGVQGFQEFLEKRCPGAVVPVDLLKLARTVSRQQQQQHLHRQLPPAALAPGAPRITRGSAPLPPPPLPPAAFGAYSGGAGPSRHHHPAHHFHHHGQAPPGLHPPPPPPLPGARVLVDAGSALPRLYGGYQTDWVCGGQWNAMLGYLSALCQACAYPGGDGLELVVMFPGGLGKDRLAEWGRRCQAERQTAQLIVGHVGNKGTPPPRAWFLPPACLSHCVRLALIRFRVKVFQSLEDHHLEVVAFFRENGFHGLLAHDSEYALYNIPSYYSSHALKLSWNGKNLTTNQFLMQEVAKQLGLKRMNFPIFAALLGNHILPDEDLAAFHWSLLGPEHPLASLKVRAHQLVLPPCDVVIKAVSEYVSSIKDPSNLDVVGKDVFKQSQSRTEDKIERFKKAVEYYSVTTKLSSLPVGPSFLGFRNNRLGNPPLPRNQMGPISPGKPMFSRQVPQKMKYPPPFPMGPNSSLLFSHSVGESHAFSEDAMLQDNSFANWAVSYDSNTSQFPNCLTSKTSPPLGPDSSHSSSSDGDEANGAGSEQITEAVQQQPGWEDPNGDRGAWGQPADAGVSETTVAESEPHIPSLLSMSTRNHMDITIPPLPPVAPEVLRVAEHRHRRGLMYPYIYHVLTKGEIKIPVCIEDECNMELPPAALLFRSARQYVYGVLFSLAETQRKMERLAIRRRLPMEVPSVILKEWSAYKGKSPQTPELVSALTFREWTCPNLKKLWLGKAVEDKNRRMRAFLACMKSDTPSMLNPANVPTHLLLMCCVLRYMVQWPGGRILHRHELDTFLAQAVSTQLYEPDQLQELKIEKLDARGIQLAALFMSGVDTALFANDACGQPVPWEHCCPWIYFDGKLFQSKLIKAGRERVSLVELCDGQADLASKVEKMRQSILEGVNMNHPPPSALLPSPTFVPPMVPSLYPVSLYSRAMGSFPPPPQARSRGFAGLHPIPPQGGKLEIAGMVVGQWAGSRSSRSRGSFGMQVVSVGGPGKGHGKEQAGRGSKGHKKGNKQGSSDVISKAVELHQSRARSQVNGNNGTLIVEEKSDPLPAPSQCALSRDSNECNNSDDHCLPVKNGEKNHVPEQELEAVAQQKEE.

Over residues 35-53 (QQQHLHRQLPPAALAPGAP) the composition is skewed to low complexity. 4 disordered regions span residues 35-105 (QQQH…HPPP), 503-575 (NCLT…SEPH), 966-1010 (SRSS…QGSS), and 1037-1077 (VEEK…KNHV). The residue at position 57 (Arg57) is an Omega-N-methylarginine. Residues 82-95 (SRHHHPAHHFHHHG) show a composition bias toward basic residues. A compositionally biased stretch (polar residues) spans 532–544 (GSEQITEAVQQQP). Positions 966-976 (SRSSRSRGSFG) are enriched in low complexity. Arg972 is modified (omega-N-methylarginine). Residues 1062-1077 (SDDHCLPVKNGEKNHV) are compositionally biased toward basic and acidic residues.

The protein belongs to the constitutive coactivator of PPAR-gamma family.

This Mus musculus (Mouse) protein is Constitutive coactivator of PPAR-gamma-like protein 2 (Fam120c).